Reading from the N-terminus, the 230-residue chain is uncharacterized protein (230 aa).

A helical membrane pass occupies residues 19 to 39 (GIFQVLLQLVLAMMTVWDFAG). Residue Asn-41 is glycosylated (N-linked (GlcNAc...) asparagine; by host). The chain crosses the membrane as a helical span at residues 55–75 (SFLLVLYTGLKQILEYMFSIC). Asn-86, Asn-157, Asn-168, and Asn-182 each carry an N-linked (GlcNAc...) asparagine; by host glycan. The stretch at 172-196 (TNLHKYQNDENDTEEDSEDIEKNSD) forms a coiled coil. The tract at residues 178–205 (QNDENDTEEDSEDIEKNSDPKENSDIDS) is disordered. Positions 180–190 (DENDTEEDSED) are enriched in acidic residues. A compositionally biased stretch (basic and acidic residues) spans 191-201 (IEKNSDPKENS).

Its subcellular location is the membrane. This is an uncharacterized protein from Acanthamoeba polyphaga mimivirus (APMV).